The sequence spans 231 residues: Small ribosomal subunit protein uS3 (231 aa).

A KH type-2 domain is found at 39-107 (IRKFIKEKLF…QVSVNIVEIK (69 aa)).

It belongs to the universal ribosomal protein uS3 family. As to quaternary structure, part of the 30S ribosomal subunit. Forms a tight complex with proteins S10 and S14.

In terms of biological role, binds the lower part of the 30S subunit head. Binds mRNA in the 70S ribosome, positioning it for translation. The sequence is that of Small ribosomal subunit protein uS3 from Pelotomaculum thermopropionicum (strain DSM 13744 / JCM 10971 / SI).